The following is a 775-amino-acid chain: Glutamine--tRNA ligase (775 aa).

Ala-2 is modified (N-acetylalanine). Residue Ser-70 is modified to Phosphoserine. Residues 271 to 273 and 277 to 283 contribute to the ATP site; these read EPN and HIGHAKA. Asp-303 is a binding site for L-glutamine. An N6-acetyllysine modification is found at Lys-309. Residue Tyr-438 coordinates L-glutamine. Residues Thr-457, 486–487, and 494–496 contribute to the ATP site; these read RL and VSK. Position 495 is a phosphoserine (Ser-495).

Belongs to the class-I aminoacyl-tRNA synthetase family. As to quaternary structure, monomer. Part of a multisubunit complex that groups tRNA ligases for Arg (RARS1), Asp (DARS1), Gln (QARS1), Ile (IARS1), Leu (LARS1), Lys (KARS1), Met (MARS1) the bifunctional ligase for Glu and Pro (EPRS1) and the auxiliary subunits AIMP1/p43, AIMP2/p38 and EEF1E1/p18. Interacts with RARS1. Part of a complex composed of RARS1, QARS1 and AIMP1.

It localises to the cytoplasm. The protein localises to the cytosol. The catalysed reaction is tRNA(Gln) + L-glutamine + ATP = L-glutaminyl-tRNA(Gln) + AMP + diphosphate. Its function is as follows. Glutamine--tRNA ligase. Plays a critical role in brain development. The sequence is that of Glutamine--tRNA ligase (Qars1) from Mus musculus (Mouse).